Here is a 441-residue protein sequence, read N- to C-terminus: BTB/POZ domain-containing protein At2g24240 (441 aa).

The region spanning 6–76 (DRIKFNVGGR…LRTGDLNVPA (71 aa)) is the BTB domain.

The protein operates within protein modification; protein ubiquitination. Its function is as follows. May act as a substrate-specific adapter of an E3 ubiquitin-protein ligase complex (CUL3-RBX1-BTB) which mediates the ubiquitination and subsequent proteasomal degradation of target proteins. In Arabidopsis thaliana (Mouse-ear cress), this protein is BTB/POZ domain-containing protein At2g24240.